Reading from the N-terminus, the 583-residue chain is MYDIKRLEAGQQKLQQAQQPLGLDLSGQQQQLTCSVITAPEHRANPNPSSISQSNPSEATHMTLLTLRRRRSLQRRACLLSILAAFVFGMALGVVVPMFGLPRHQDSPPDLPEEQIQMVAVEPLSSYRVEFIKETDELSAEQVFRNAFHLEQDKDAPDSMVVKKLDTNDGSIKEFHVQRTASGRYRKGPERRLSKKMPERVQPQETSRSPTTSPTNPTSEHQAGFIEEDVYWGPTVEQALPKGFAAKDQVSWERFVGEQGRVVRLEQGCGRMQNRMVVFADGTRACARYRQNTDQIQGEIFSYYLGQLLNISNLAPSAATVVDTSTPNWAAALGDITQAQWKERRPVVLTRWLSDLEPAGIPQPFQPLERHLNKHDVWNLTRHMQSERQAQSQPHGLLKRLGAASSPGSAHQSNAIEETGTGTETANGALVQRLIELAQWSDLIVFDYLIANLDRVVNNLYNFQWNADIMAAPAHNLARQSASQLLVFLDNESGLLHGYRLLKKYEAYHSLLLDNLCVFRRPTIDALRRLRAAGAGRRLRDLFERTTSAGVRDVLPSLPDKSVKILVERIDRVLGQVQKCQGS.

Residues M1–C78 are Cytoplasmic-facing. Residues L79–F99 form a helical; Signal-anchor for type II membrane protein membrane-spanning segment. The Extracellular portion of the chain corresponds to G100–S583. The segment at R179–Q222 is disordered. Residues K187–E199 show a composition bias toward basic and acidic residues. Positions T206–S219 are enriched in low complexity. N-linked (GlcNAc...) asparagine glycans are attached at residues N310 and N379. Positions M384–T421 are disordered. N491 carries N-linked (GlcNAc...) asparagine glycosylation.

It belongs to the FJX1/FJ family. Proteolytically cleaved to yield a secreted protein. In terms of tissue distribution, in the eye disk, expressed in a gradient ahead of the morphogenetic furrow, high at the equator and low at the poles of the eye. In the leg disk, expressed in concentric rings, possibly corresponding to segmental boundaries. In the wing disk, expression is localized in the wing pouch; low in peripheral regions and high towards the center.

The protein resides in the golgi apparatus membrane. The protein localises to the secreted. It carries out the reaction L-seryl-[protein] + ATP = O-phospho-L-seryl-[protein] + ADP + H(+). The enzyme catalyses L-threonyl-[protein] + ATP = O-phospho-L-threonyl-[protein] + ADP + H(+). Functionally, golgi serine/threonine protein kinase required for intermediate growth in the proximal-distal axis. Phosphorylates specific residues within extracellular cadherin domains of Fat (ft) and Dachsous (ds) as they transit through the Golgi. Acts in ommatidial polarity determination as a secondary signal downstream of Notch, JAK/STAT and wingless. Also necessary for the initiation, up-regulation or maintenance of Notch ligand, Serrate (Ser) expression in legs, thereby participating in a feedback loop with N signaling. Sufficient for joint formation and growth in the leg. The polypeptide is Extracellular serine/threonine protein kinase four-jointed (Drosophila melanogaster (Fruit fly)).